Consider the following 174-residue polypeptide: ATP-dependent protease subunit HslV (174 aa).

Thr2 is an active-site residue. The Na(+) site is built by Gly157, Cys160, and Thr163.

The protein belongs to the peptidase T1B family. HslV subfamily. A double ring-shaped homohexamer of HslV is capped on each side by a ring-shaped HslU homohexamer. The assembly of the HslU/HslV complex is dependent on binding of ATP.

The protein localises to the cytoplasm. It carries out the reaction ATP-dependent cleavage of peptide bonds with broad specificity.. With respect to regulation, allosterically activated by HslU binding. Protease subunit of a proteasome-like degradation complex believed to be a general protein degrading machinery. The polypeptide is ATP-dependent protease subunit HslV (Shewanella halifaxensis (strain HAW-EB4)).